The primary structure comprises 130 residues: Small ribosomal subunit protein uS8 (130 aa).

This sequence belongs to the universal ribosomal protein uS8 family. As to quaternary structure, part of the 30S ribosomal subunit. Contacts proteins S5 and S12.

In terms of biological role, one of the primary rRNA binding proteins, it binds directly to 16S rRNA central domain where it helps coordinate assembly of the platform of the 30S subunit. In Mannheimia succiniciproducens (strain KCTC 0769BP / MBEL55E), this protein is Small ribosomal subunit protein uS8.